The primary structure comprises 236 residues: Leucyl/phenylalanyl-tRNA--protein transferase (236 aa).

Belongs to the L/F-transferase family.

It is found in the cytoplasm. The enzyme catalyses N-terminal L-lysyl-[protein] + L-leucyl-tRNA(Leu) = N-terminal L-leucyl-L-lysyl-[protein] + tRNA(Leu) + H(+). It catalyses the reaction N-terminal L-arginyl-[protein] + L-leucyl-tRNA(Leu) = N-terminal L-leucyl-L-arginyl-[protein] + tRNA(Leu) + H(+). It carries out the reaction L-phenylalanyl-tRNA(Phe) + an N-terminal L-alpha-aminoacyl-[protein] = an N-terminal L-phenylalanyl-L-alpha-aminoacyl-[protein] + tRNA(Phe). In terms of biological role, functions in the N-end rule pathway of protein degradation where it conjugates Leu, Phe and, less efficiently, Met from aminoacyl-tRNAs to the N-termini of proteins containing an N-terminal arginine or lysine. The chain is Leucyl/phenylalanyl-tRNA--protein transferase from Shewanella sp. (strain MR-7).